A 417-amino-acid chain; its full sequence is Serpin A3-7 (417 aa).

The signal sequence occupies residues 1-25 (MRTERTSFLLALGLLVSGFCSRVHC). Asparagine 103, asparagine 183, asparagine 221, and asparagine 267 each carry an N-linked (GlcNAc...) asparagine glycan.

It belongs to the serpin family. Homodimer.

Its subcellular location is the cytoplasmic vesicle. The protein localises to the secretory vesicle. The protein resides in the chromaffin granule. It localises to the secreted. Its function is as follows. Serine protease inhibitor. The sequence is that of Serpin A3-7 from Bos taurus (Bovine).